The following is a 413-amino-acid chain: 3-oxo-tetronate kinase (413 aa).

ATP is bound by residues S254, 354–357 (GGET), and G397.

The protein belongs to the four-carbon acid sugar kinase family.

It carries out the reaction 3-dehydro-L-erythronate + ATP = 3-dehydro-4-O-phospho-L-erythronate + ADP + H(+). It catalyses the reaction 3-dehydro-D-erythronate + ATP = 3-dehydro-4-O-phospho-D-erythronate + ADP + H(+). Catalyzes the ATP-dependent phosphorylation of 3-oxo-tetronate to 3-oxo-tetronate 4-phosphate. The chain is 3-oxo-tetronate kinase from Haemophilus influenzae (strain ATCC 51907 / DSM 11121 / KW20 / Rd).